The following is a 1493-amino-acid chain: Myosin-13 (1493 aa).

Residues 18–67 (KVGSIVWVQDPEEAWIDGEVVEVNGEDIKVQCTSGKTVVAKGSNTYPKDM) enclose the Myosin N-terminal SH3-like domain. The Myosin motor domain occupies 72–741 (SGVDDMTTLA…QMAELDDRRT (670 aa)). ATP is bound by residues 166–173 (GESGAGKT) and 219–227 (NNNSSRFGK). Actin-binding stretches follow at residues 504–538 (LIEKKRGGIIALLDEACMFPRSTHKTFSQKLYETL), 540–563 (DNKYFSKPKLSRTDFTICHYAGDV), 598–622 (FPPLVEDANKQSKFSSIASQFKQQL), and 622–644 (LASLIEGLNTTEPHYIRCVKPNN). 6 IQ domains span residues 744–773 (LGRAACIIQWKFRSYLTRQSFIMLRNAAIN), 767–796 (LRNAAINIQAVYRGQVARYRFENLRREAAA), 792–821 (REAAALKIQRALRIHLDRKRSYIEAVVTVQ), 813–842 (YIEAVVTVQSGLRGMAARVVLRRKTKATTV), 836–865 (KTKATTVIQSHCRRLRAELHYKKLKKAAIT), and 859–888 (LKKAAITTQSAWRARLARKELRKLKTDARD). Residues 889-1057 (TVVLQAAKSM…NFLKESVLTT (169 aa)) adopt a coiled-coil conformation. A disordered region spans residues 1085 to 1114 (QLSGAEFTTPPRIQESGSDTKSRGSHIDPQ). A compositionally biased stretch (basic and acidic residues) spans 1102–1114 (SDTKSRGSHIDPQ). In terms of domain architecture, Dilute spans 1161 to 1444 (DRLVQMIGSA…IASMTGVMTD (284 aa)).

The protein belongs to the TRAFAC class myosin-kinesin ATPase superfamily. Myosin family. Plant myosin class XI subfamily. Homodimer.

Functionally, myosin heavy chain that is required for the cell cycle-regulated transport of various organelles and proteins for their segregation. Functions by binding with its tail domain to receptor proteins on organelles and exerting force with its N-terminal motor domain against actin filaments, thereby transporting its cargo along polarized actin cables. This chain is Myosin-13 (XI-G), found in Arabidopsis thaliana (Mouse-ear cress).